The chain runs to 760 residues: RxLR effector protein PSR2 (760 aa).

Residues M1–A21 form the signal peptide. The short motif at R47–R62 is the RxLR-dEER element. A WY1 repeat occupies P87–D134. Residues P87–Q760 form a 7 X 93 AA tandem repeats region. An LWY2 repeat occupies P135–N221. The LWY3 repeat unit spans residues K222–F312. The stretch at P313 to P403 is one LWY4 repeat. Residues E404 to F496 form an LWY5 repeat. The stretch at P497–F584 is one LWY6 repeat. Residues P585–Q760 form an LWY7 repeat.

The protein belongs to the RxLR effector family. In terms of assembly, interacts with host dsRNA-binding protein DRB4.

The protein localises to the secreted. It localises to the host cell. In terms of biological role, secreted effector that possesses RNA silencing suppression activity by inhibiting the biogenesis of small RNAs in the host plant to promote enhanced susceptibility of host to the pathogen during infection. Interferes with secondary siRNA production by associating with host dsRNA-binding protein DRB4. Inhibits the host salicylic acid pathway during infection. The polypeptide is RxLR effector protein PSR2 (Phytophthora infestans (strain T30-4) (Potato late blight agent)).